The primary structure comprises 67 residues: Conotoxin Cal6.35 (67 aa).

The N-terminal stretch at 1 to 22 (MKLTCVLIVAVLILTACQVIAA) is a signal peptide. Intrachain disulfides connect Cys43/Cys53, Cys46/Cys59, and Cys52/Cys66.

This sequence belongs to the conotoxin O1 superfamily. Expressed by the venom duct.

It localises to the secreted. Its function is as follows. Probable neurotoxin. This is Conotoxin Cal6.35 from Californiconus californicus (California cone).